The chain runs to 176 residues: Ribosome maturation factor RimM (176 aa).

The PRC barrel domain maps to 101–173 (EGEYYHYRLI…RMVVDLPEGL (73 aa)).

It belongs to the RimM family. In terms of assembly, binds ribosomal protein uS19.

Its subcellular location is the cytoplasm. Its function is as follows. An accessory protein needed during the final step in the assembly of 30S ribosomal subunit, possibly for assembly of the head region. Essential for efficient processing of 16S rRNA. May be needed both before and after RbfA during the maturation of 16S rRNA. It has affinity for free ribosomal 30S subunits but not for 70S ribosomes. This Syntrophobacter fumaroxidans (strain DSM 10017 / MPOB) protein is Ribosome maturation factor RimM.